The following is a 305-amino-acid chain: GTP cyclohydrolase FolE2 (305 aa).

It belongs to the GTP cyclohydrolase IV family.

The catalysed reaction is GTP + H2O = 7,8-dihydroneopterin 3'-triphosphate + formate + H(+). The protein operates within cofactor biosynthesis; 7,8-dihydroneopterin triphosphate biosynthesis; 7,8-dihydroneopterin triphosphate from GTP: step 1/1. Functionally, converts GTP to 7,8-dihydroneopterin triphosphate. This is GTP cyclohydrolase FolE2 from Xanthomonas axonopodis pv. citri (strain 306).